The following is a 261-amino-acid chain: tRNA pseudouridine synthase A (261 aa).

Asp51 serves as the catalytic Nucleophile. Residue Tyr109 coordinates substrate.

Belongs to the tRNA pseudouridine synthase TruA family. As to quaternary structure, homodimer.

The enzyme catalyses uridine(38/39/40) in tRNA = pseudouridine(38/39/40) in tRNA. Its function is as follows. Formation of pseudouridine at positions 38, 39 and 40 in the anticodon stem and loop of transfer RNAs. The chain is tRNA pseudouridine synthase A from Shewanella frigidimarina (strain NCIMB 400).